The primary structure comprises 319 residues: Coproporphyrin III ferrochelatase 2 (319 aa).

Fe-coproporphyrin III-binding positions include Tyr-13, Arg-30, 46–47 (RY), Ser-54, and Tyr-125. Positions 181 and 262 each coordinate Fe(2+).

It belongs to the ferrochelatase family.

The protein localises to the cytoplasm. It carries out the reaction Fe-coproporphyrin III + 2 H(+) = coproporphyrin III + Fe(2+). The protein operates within porphyrin-containing compound metabolism; protoheme biosynthesis. Functionally, involved in coproporphyrin-dependent heme b biosynthesis. Catalyzes the insertion of ferrous iron into coproporphyrin III to form Fe-coproporphyrin III. This Bacillus cereus (strain ATCC 14579 / DSM 31 / CCUG 7414 / JCM 2152 / NBRC 15305 / NCIMB 9373 / NCTC 2599 / NRRL B-3711) protein is Coproporphyrin III ferrochelatase 2.